A 285-amino-acid chain; its full sequence is MATYAVGDLQGCLQPLKCLLERAHFNPAVDRLWLVGDLVNRGPESLETLRYLYSIRDSLVCVLGNHDLHLLAAWHNVERLKKSDTLREIIEAPDADQLFDWLRRQKLLHYDEPRGIAMVHAGIPPQWTLGKALELAAEVEEVLRDDGRLKLYLDGMYGNEPNKWSKDLAGVERLRVITNYFTRMRFCTATGKLDLKSKEGLESAPKGYKPWFDHPDRRSRHVKIIFGHWAALEGRVDVPGVIALDTGCVWGGAMTLYNVDSGEYHRCDCTREGTPRPAALNNDQP.

This sequence belongs to the Ap4A hydrolase family.

It catalyses the reaction P(1),P(4)-bis(5'-adenosyl) tetraphosphate + H2O = 2 ADP + 2 H(+). In terms of biological role, hydrolyzes diadenosine 5',5'''-P1,P4-tetraphosphate to yield ADP. In Pseudomonas entomophila (strain L48), this protein is Bis(5'-nucleosyl)-tetraphosphatase, symmetrical.